The following is a 141-amino-acid chain: Putative pre-16S rRNA nuclease (141 aa).

The protein belongs to the YqgF nuclease family.

It localises to the cytoplasm. Could be a nuclease involved in processing of the 5'-end of pre-16S rRNA. This is Putative pre-16S rRNA nuclease from Clostridioides difficile (strain 630) (Peptoclostridium difficile).